We begin with the raw amino-acid sequence, 355 residues long: Peptide chain release factor 1 (355 aa).

The residue at position 231 (Gln231) is an N5-methylglutamine. Basic and acidic residues predominate over residues 281-291 (ERLAKESEARK). The tract at residues 281–302 (ERLAKESEARKSQVGSGDRSER) is disordered.

It belongs to the prokaryotic/mitochondrial release factor family. Methylated by PrmC. Methylation increases the termination efficiency of RF1.

It is found in the cytoplasm. Functionally, peptide chain release factor 1 directs the termination of translation in response to the peptide chain termination codons UAG and UAA. The sequence is that of Peptide chain release factor 1 from Campylobacter jejuni subsp. doylei (strain ATCC BAA-1458 / RM4099 / 269.97).